A 427-amino-acid polypeptide reads, in one-letter code: Endothelin-1 receptor (427 aa).

The first 20 residues, 1 to 20 (METLCLRASFWLALVGCVIS), serve as a signal peptide directing secretion. The Extracellular segment spans residues 21-80 (DNPERYSTNLSNHVDDFTTFRGTELSFLVTTHQPTNLVLPSNGSMHNYCPQQTKITSAFK). Asparagine 29 and asparagine 62 each carry an N-linked (GlcNAc...) asparagine glycan. A helical membrane pass occupies residues 81–102 (YINTVISCTIFIVGMVGNATLL). Residues 103-112 (RIIYQNKCMR) are Cytoplasmic-facing. Residues 113-132 (NGPNALIASLALGDLIYVVI) traverse the membrane as a helical segment. Over 133 to 159 (DLPINVFKLLAGRWPFDHNDFGVFLCK) the chain is Extracellular. Cysteines 158 and 239 form a disulfide. The chain crosses the membrane as a helical span at residues 160 to 181 (LFPFLQKSSVGITVLNLCALSV). Residues 182–205 (DRYRAVASWSRVQGIGIPLVTAIE) lie on the Cytoplasmic side of the membrane. Residues 206-229 (IVSIWILSFILAIPEAIGFVMVPF) traverse the membrane as a helical segment. Topologically, residues 230-256 (EYRGEQHKTCMLNATSKFMEFYQDVKD) are extracellular. A helical transmembrane segment spans residues 257–278 (WWLFGFYFCMPLVCTAIFYTLM). Topologically, residues 279 to 306 (TCEMLNRRNGSLRIALSEHLKQRREVAK) are cytoplasmic. A helical membrane pass occupies residues 307-328 (TVFCLVVIFALCWFPLHLSRIL). At 329 to 347 (KKTVYNEMDKNRCELLSFL) the chain is on the extracellular side. The helical transmembrane segment at 348 to 372 (LLMDYIGINLATMNSCINPIALYFV) threads the bilayer. Over 373–427 (SKKFKNCFQSCLCCCCYQSKSLMTSVPMNGTSIQWKNHDQNNHNTDRSSHKDSMN) the chain is Cytoplasmic. The disordered stretch occupies residues 406–427 (QWKNHDQNNHNTDRSSHKDSMN). Over residues 408-427 (KNHDQNNHNTDRSSHKDSMN) the composition is skewed to basic and acidic residues. Residue serine 425 is modified to Phosphoserine.

It belongs to the G-protein coupled receptor 1 family. Endothelin receptor subfamily. EDNRA sub-subfamily. In terms of assembly, interacts with HDAC7 and KAT5. Isoform 1, isoform 3 and isoform 4 are expressed in a variety of tissues, with highest levels in the aorta and cerebellum, followed by lung, atrium and cerebral cortex, lower levels in the placenta, kidney, adrenal gland, duodenum, colon, ventricle and liver but no expression in umbilical vein endothelial cells. Within the placenta, isoform 1, isoform 2, isoform 3 and isoform 4 are expressed in the villi and stem villi vessels.

It is found in the cell membrane. Functionally, receptor for endothelin-1. Mediates its action by association with G proteins that activate a phosphatidylinositol-calcium second messenger system. The rank order of binding affinities for ET-A is: ET1 &gt; ET2 &gt;&gt; ET3. In Homo sapiens (Human), this protein is Endothelin-1 receptor.